A 983-amino-acid chain; its full sequence is UPF0182 protein MLBr00644 (983 aa).

7 consecutive transmembrane segments (helical) span residues 19–39 (LIMV…LVDA), 63–83 (VVVF…GLAV), 113–133 (LIGV…AQSY), 175–195 (FVAV…FGGI), 210–230 (LQLV…YWLD), 259–279 (KLIL…AITL), and 287–307 (IGLV…PLIV).

It belongs to the UPF0182 family.

The protein resides in the cell membrane. This chain is UPF0182 protein MLBr00644, found in Mycobacterium leprae (strain Br4923).